Here is a 225-residue protein sequence, read N- to C-terminus: Small ribosomal subunit protein uS2 (225 aa).

The segment covering 1–14 has biased composition (basic and acidic residues); that stretch reads MAEAKPAPEKEAAA. Positions 1–33 are disordered; sequence MAEAKPAPEKEAAAKTESVPVETEGEGPSVKEG.

It belongs to the universal ribosomal protein uS2 family.

The chain is Small ribosomal subunit protein uS2 from Methanosarcina barkeri (strain Fusaro / DSM 804).